A 608-amino-acid chain; its full sequence is Serine/threonine-protein kinase ROP17 (608 aa).

Positions 1 to 21 are cleaved as a signal peptide; sequence MELVLCFVIITISGVIRESSA. The N-linked (GlcNAc...) asparagine glycan is linked to Asn76. In terms of domain architecture, Protein kinase spans 283–579; that stretch reads LKKRGFLGGG…QQALEQFSLL (297 aa). ATP-binding positions include 289-297 and Lys312; that span reads LGGGGFGLV. The Proton acceptor role is filled by Asp436.

Belongs to the protein kinase superfamily. Ser/Thr protein kinase family. In terms of assembly, interacts with ROP5; interaction with ROP5 does not affect kinase activity. Interacts with human BCL2; the interaction probably promotes BCL2 phosphorylation and degradation.

The protein resides in the secreted. It localises to the cytoplasmic vesicle. The protein localises to the secretory vesicle. Its subcellular location is the rhoptry. It is found in the parasitophorous vacuole membrane. The enzyme catalyses L-threonyl-[protein] + ATP = O-phospho-L-threonyl-[protein] + ADP + H(+). It catalyses the reaction L-seryl-[protein] + ATP = O-phospho-L-seryl-[protein] + ADP + H(+). Functionally, protein kinase. Virulence factor. Promotes migration of Toxoplasma-infected macrophages through collagen matrix, facilitating parasite transport through tissues and systemic dissemination. Plays a role in the translocation of dense granule effectors, such as GRA16 and GRA24, across the parasitophorous vacuole membrane in Toxoplasma-infected host cells. Phosphorylates mouse IRGB6 (TGTP1/TGTP2), an immunity-related GTPase (IRG) that protects mice from infection by certain intracellular pathogens; the phosphorylation leads to the disassembly of IRGB6 polymers into monomers and dimers. May modulate gene expression in human cells. Promotes autophagy in human cells via modulation of the BCL2-BECN1 pathway. The protein is Serine/threonine-protein kinase ROP17 of Toxoplasma gondii.